Consider the following 830-residue polypeptide: Eisosome protein 1 (830 aa).

Disordered regions lie at residues 1 to 29, 128 to 156, and 650 to 830; these read MSLVSAVTGDESRDTNGAEQSSVYQSAGK, RSRTSSTASTTVTYVNSSSSSPLHSKTPK, and GEFL…KEVF. Low complexity-rich tracts occupy residues 128–148 and 741–761; these read RSRTSSTASTTVTYVNSSSSS and TKTTQPTPLKSSPKPSNKPVT. Basic and acidic residues predominate over residues 810–830; sequence EGGKEEPTSKDNRKSLFKEVF.

This sequence belongs to the EIS1 family.

It localises to the cytoplasmic granule. It is found in the cell membrane. Its function is as follows. Required for normal formation of eisosomes, large cytoplasmic protein assemblies that localize to specialized domains on plasma membrane and mark the site of endocytosis. This chain is Eisosome protein 1 (EIS1), found in Kluyveromyces lactis (strain ATCC 8585 / CBS 2359 / DSM 70799 / NBRC 1267 / NRRL Y-1140 / WM37) (Yeast).